A 471-amino-acid chain; its full sequence is 3-isopropylmalate dehydratase large subunit (471 aa).

Cys-347, Cys-407, and Cys-410 together coordinate [4Fe-4S] cluster.

This sequence belongs to the aconitase/IPM isomerase family. LeuC type 1 subfamily. As to quaternary structure, heterodimer of LeuC and LeuD. [4Fe-4S] cluster serves as cofactor.

The enzyme catalyses (2R,3S)-3-isopropylmalate = (2S)-2-isopropylmalate. It functions in the pathway amino-acid biosynthesis; L-leucine biosynthesis; L-leucine from 3-methyl-2-oxobutanoate: step 2/4. Functionally, catalyzes the isomerization between 2-isopropylmalate and 3-isopropylmalate, via the formation of 2-isopropylmaleate. The sequence is that of 3-isopropylmalate dehydratase large subunit from Geobacillus kaustophilus (strain HTA426).